The chain runs to 451 residues: Phosphoglucosamine mutase (451 aa).

S102 functions as the Phosphoserine intermediate in the catalytic mechanism. Mg(2+) is bound by residues S102, D243, D245, and D247. S102 bears the Phosphoserine mark.

The protein belongs to the phosphohexose mutase family. Requires Mg(2+) as cofactor. Activated by phosphorylation.

The enzyme catalyses alpha-D-glucosamine 1-phosphate = D-glucosamine 6-phosphate. Its function is as follows. Catalyzes the conversion of glucosamine-6-phosphate to glucosamine-1-phosphate. This is Phosphoglucosamine mutase from Brucella anthropi (strain ATCC 49188 / DSM 6882 / CCUG 24695 / JCM 21032 / LMG 3331 / NBRC 15819 / NCTC 12168 / Alc 37) (Ochrobactrum anthropi).